A 444-amino-acid polypeptide reads, in one-letter code: Nuclear envelope integral membrane protein 1 (444 aa).

An N-terminal signal peptide occupies residues M1 to A43. N125 carries N-linked (GlcNAc...) asparagine glycosylation. 5 helical membrane passes run P161–S181, F186–I206, P216–F236, C245–C265, and L289–A309. The tract at residues F186 to Q297 is a; required for its colocalization with lamins at the nuclear envelope. Residues P336–E405 form a b; required for interaction with RAN-GTP region. A required for nuclear localization region spans residues P336–T444. 3 positions are modified to phosphoserine: S368, S424, and S425.

This sequence belongs to the NEMP family. As to quaternary structure, homooligomer. Interacts with RAN-GTP. Interacts with EMD. Phosphorylation may regulate its interaction with RAN-GTP.

It localises to the nucleus inner membrane. It is found in the nucleus envelope. Its function is as follows. Together with EMD, contributes to nuclear envelope stiffness in germ cells. Required for female fertility. Essential for normal erythropoiesis. Required for efficient nuclear envelope opening and enucleation during the late stages of erythroblast maturation. This Pongo abelii (Sumatran orangutan) protein is Nuclear envelope integral membrane protein 1 (NEMP1).